The chain runs to 308 residues: tRNA uridine(34) hydroxylase (308 aa).

In terms of domain architecture, Rhodanese spans 128–222 (ADENTVVVDT…YLEEVPREQS (95 aa)). Cys182 (cysteine persulfide intermediate) is an active-site residue.

This sequence belongs to the TrhO family.

It carries out the reaction uridine(34) in tRNA + AH2 + O2 = 5-hydroxyuridine(34) in tRNA + A + H2O. Its function is as follows. Catalyzes oxygen-dependent 5-hydroxyuridine (ho5U) modification at position 34 in tRNAs. The sequence is that of tRNA uridine(34) hydroxylase from Brucella suis biovar 1 (strain 1330).